A 402-amino-acid chain; its full sequence is CMP-sialic acid transporter 3 (402 aa).

The Cytoplasmic portion of the chain corresponds to 1–42 (MSGEVECRVCHAKVQVPMAAAAVSKAYDIHRSSVSSRQRALN). A helical membrane pass occupies residues 43–63 (VLLVSGDCVLAGLQPILVYMC). At 64–73 (KVDGKFKFSP) the chain is on the lumenal side. A helical membrane pass occupies residues 74–94 (VSVNFLTEITKIIFAIIMLCI). At 95-118 (QARRLKVGEKPFLTVSTFMQAARN) the chain is on the cytoplasmic side. A helical transmembrane segment spans residues 119-139 (NVLLAVPALFYAINNYMKFVM). Topologically, residues 140-146 (QLYFNPA) are lumenal. A helical membrane pass occupies residues 147–167 (TVKMLGNLKVLVIAVLLKVIM). The Cytoplasmic portion of the chain corresponds to 168–170 (RRR). The chain crosses the membrane as a helical span at residues 171-191 (FSTIQWEALALLLIGISVNQL). Residues 192-202 (KSLPEGSSTLG) lie on the Lumenal side of the membrane. Residues 203 to 223 (LPVAAGAYLYTLFFVTVPALA) form a helical membrane-spanning segment. The Cytoplasmic portion of the chain corresponds to 224–243 (SVYNEKALKSQFDTSIYLQN). Residues 244-264 (LFLYGYGAIFNFLGLVITAII) traverse the membrane as a helical segment. Residues 265–280 (QGPSSFNILEGHSKAT) lie on the Lumenal side of the membrane. Residues 281 to 301 (MFLICNNAAQGILSSFFFKYA) traverse the membrane as a helical segment. At 302–321 (DTILKKYSSTIATIFTGVAS) the chain is on the cytoplasmic side. A helical membrane pass occupies residues 322 to 342 (AVLFGHTLTINFVLAISIVII). The Lumenal portion of the chain corresponds to 343-402 (SMHQYLSNQIKDEVPSSKIEMGDAHEHRSKESVVVNVSDSIATEAKHRHGTDERQPLLPV).

The protein belongs to the nucleotide-sugar transporter family. CMP-Sialate:CMP antiporter (TC 2.A.7.12) subfamily.

It localises to the golgi apparatus membrane. Its function is as follows. Sugar transporter involved in the transport of CMP-sialic acid from the cytoplasm into the Golgi. May transport important nucleotide sugars such as CMP-Kdo (2-keto-3-deoxy-D-manno-octulosonic acid) in physiological conditions. The chain is CMP-sialic acid transporter 3 from Oryza sativa subsp. indica (Rice).